A 354-amino-acid polypeptide reads, in one-letter code: Transcriptional regulator URE2 (354 aa).

The residue at position 2 (M2) is an N-acetylmethionine. The interval 2–89 is prion domain (PrD); it reads MNNNGNQVSN…TLEQHRQQQQ (88 aa). Positions 22-42 are enriched in polar residues; the sequence is GNRNSNTTTDQSNINFEFSTG. A disordered region spans residues 22–76; it reads GNRNSNTTTDQSNINFEFSTGVNNNNNNNSSSNNNNVQNNNSGRNGSQNNDNENN. The segment covering 43-73 has biased composition (low complexity); that stretch reads VNNNNNNNSSSNNNNVQNNNSGRNGSQNNDN. The GST N-terminal domain maps to 112–196; that stretch reads EGYTLFSHRS…HLVNKYYKET (85 aa). Residues N124, H151, 164 to 165, and 180 to 181 contribute to the glutathione site; these read RV and ES. A GST C-terminal domain is found at 205–354; sequence DLADQSQINA…PAVIKALRGE (150 aa).

It belongs to the GST superfamily. In terms of assembly, homodimer. Interacts with NNK1.

Its subcellular location is the cytoplasm. The enzyme catalyses 2 glutathione + H2O2 = glutathione disulfide + 2 H2O. Functionally, plays an important role in nitrogen catabolite repression. Down-regulates the expression of many genes involved in nitrogen utilization by inhibiting the GATA transcriptional activators GLN3 and GAT1. Under good nitrogen conditions, binds to the phosphorylated forms of GLN3 and GAT1 and sequesters them in the cytoplasm, preventing transcription of genes expressed upon nitrogen limitation. Is also an atypical glutaredoxin without a catalytical cysteine residue. Has glutathione peroxidase and thiol:disulfide oxidoreductase activities in both native and fibrillar form. Also shows insulin disulfide reductase and dehydroascorbic acid reductase (DHAR) activities. The protein is Transcriptional regulator URE2 (URE2) of Saccharomyces cerevisiae (strain ATCC 204508 / S288c) (Baker's yeast).